A 250-amino-acid chain; its full sequence is Ribosomal RNA small subunit methyltransferase J (250 aa).

S-adenosyl-L-methionine contacts are provided by residues Arg102–Asp103, Glu118–Arg119, Ser154–Ser155, and Asp172.

Belongs to the methyltransferase superfamily. RsmJ family.

The protein resides in the cytoplasm. The catalysed reaction is guanosine(1516) in 16S rRNA + S-adenosyl-L-methionine = N(2)-methylguanosine(1516) in 16S rRNA + S-adenosyl-L-homocysteine + H(+). Its function is as follows. Specifically methylates the guanosine in position 1516 of 16S rRNA. The protein is Ribosomal RNA small subunit methyltransferase J of Edwardsiella ictaluri (strain 93-146).